The primary structure comprises 317 residues: Transaldolase (317 aa).

The Schiff-base intermediate with substrate role is filled by K126.

Belongs to the transaldolase family. Type 1 subfamily. As to quaternary structure, homodimer.

The protein localises to the cytoplasm. It catalyses the reaction D-sedoheptulose 7-phosphate + D-glyceraldehyde 3-phosphate = D-erythrose 4-phosphate + beta-D-fructose 6-phosphate. It participates in carbohydrate degradation; pentose phosphate pathway; D-glyceraldehyde 3-phosphate and beta-D-fructose 6-phosphate from D-ribose 5-phosphate and D-xylulose 5-phosphate (non-oxidative stage): step 2/3. Transaldolase is important for the balance of metabolites in the pentose-phosphate pathway. This chain is Transaldolase, found in Burkholderia orbicola (strain MC0-3).